The sequence spans 211 residues: ATP phosphoribosyltransferase (211 aa).

This sequence belongs to the ATP phosphoribosyltransferase family. Short subfamily. Heteromultimer composed of HisG and HisZ subunits.

It is found in the cytoplasm. It carries out the reaction 1-(5-phospho-beta-D-ribosyl)-ATP + diphosphate = 5-phospho-alpha-D-ribose 1-diphosphate + ATP. It participates in amino-acid biosynthesis; L-histidine biosynthesis; L-histidine from 5-phospho-alpha-D-ribose 1-diphosphate: step 1/9. In terms of biological role, catalyzes the condensation of ATP and 5-phosphoribose 1-diphosphate to form N'-(5'-phosphoribosyl)-ATP (PR-ATP). Has a crucial role in the pathway because the rate of histidine biosynthesis seems to be controlled primarily by regulation of HisG enzymatic activity. The protein is ATP phosphoribosyltransferase of Lacticaseibacillus casei (strain BL23) (Lactobacillus casei).